The following is a 335-amino-acid chain: 5-formaminoimidazole-4-carboxamide-1-(beta)-D-ribofuranosyl 5'-monophosphate synthetase (335 aa).

5-amino-1-(5-phospho-beta-D-ribosyl)imidazole-4-carboxamide contacts are provided by H21 and S86. Residues 107–315 enclose the ATP-grasp domain; it reads RELLRWEADQ…YFDKPMDMGE (209 aa). ATP-binding positions include 137-189 and E211; that span reads PTEV…VPAY. N231 serves as a coordination point for 5-amino-1-(5-phospho-beta-D-ribosyl)imidazole-4-carboxamide. Mg(2+) contacts are provided by E270 and E283.

Belongs to the phosphohexose mutase family. Mg(2+) is required as a cofactor. Requires Mn(2+) as cofactor.

It carries out the reaction 5-amino-1-(5-phospho-beta-D-ribosyl)imidazole-4-carboxamide + formate + ATP = 5-formamido-1-(5-phospho-D-ribosyl)imidazole-4-carboxamide + ADP + phosphate. It functions in the pathway purine metabolism; IMP biosynthesis via de novo pathway; 5-formamido-1-(5-phospho-D-ribosyl)imidazole-4-carboxamide from 5-amino-1-(5-phospho-D-ribosyl)imidazole-4-carboxamide (formate route): step 1/1. Its function is as follows. Catalyzes the ATP- and formate-dependent formylation of 5-aminoimidazole-4-carboxamide-1-beta-d-ribofuranosyl 5'-monophosphate (AICAR) to 5-formaminoimidazole-4-carboxamide-1-beta-d-ribofuranosyl 5'-monophosphate (FAICAR) in the absence of folates. This chain is 5-formaminoimidazole-4-carboxamide-1-(beta)-D-ribofuranosyl 5'-monophosphate synthetase, found in Pyrobaculum arsenaticum (strain DSM 13514 / JCM 11321 / PZ6).